Here is a 97-residue protein sequence, read N- to C-terminus: Co-chaperonin GroES (97 aa).

The protein belongs to the GroES chaperonin family. As to quaternary structure, heptamer of 7 subunits arranged in a ring. Interacts with the chaperonin GroEL.

The protein localises to the cytoplasm. Together with the chaperonin GroEL, plays an essential role in assisting protein folding. The GroEL-GroES system forms a nano-cage that allows encapsulation of the non-native substrate proteins and provides a physical environment optimized to promote and accelerate protein folding. GroES binds to the apical surface of the GroEL ring, thereby capping the opening of the GroEL channel. The sequence is that of Co-chaperonin GroES from Pectobacterium carotovorum subsp. carotovorum (strain PC1).